Consider the following 260-residue polypeptide: Opacity protein opA58 (260 aa).

An N-terminal signal peptide occupies residues methionine 1–alanine 23.

This sequence belongs to the opacity porin family.

Its subcellular location is the cell outer membrane. Functionally, implicated in a number of adherence functions. OPA proteins are implicated in pathogenesis and are subject to phase variation. The sequence is that of Opacity protein opA58 (opaJ) from Neisseria gonorrhoeae.